We begin with the raw amino-acid sequence, 475 residues long: Ataxin-10 (475 aa).

Arginine 10 bears the Omega-N-methylarginine mark. Serine 12 and serine 77 each carry phosphoserine. Threonine 82 bears the Phosphothreonine mark. Serine 430 is modified (phosphoserine).

This sequence belongs to the ataxin-10 family. As to quaternary structure, homooligomer. Interacts with GNB2. Interacts with IQCB1. Interacts with OGT. Post-translationally, polyubiquitinated. In terms of processing, phosphorylation at Ser-12 by AURKB promotes the association of ATXN10 with PLK1. Phosphorylation at Ser-77 and Thr-82 by PLK1 may play a role in the regulation of cytokinesis and may stimulate the proteasome-mediated degradation of ATXN10.

The protein resides in the cytoplasm. The protein localises to the perinuclear region. Its subcellular location is the cytoskeleton. It is found in the cilium basal body. It localises to the microtubule organizing center. The protein resides in the centrosome. The protein localises to the centriole. Its subcellular location is the midbody. Its function is as follows. May play a role in the regulation of cytokinesis. May play a role in signaling by stimulating protein glycosylation. Induces neuritogenesis by activating the Ras-MAP kinase pathway and is necessary for the survival of cerebellar neurons. Does not appear to play a major role in ciliogenesis. This chain is Ataxin-10 (ATXN10), found in Bos taurus (Bovine).